Here is a 500-residue protein sequence, read N- to C-terminus: Na(+)/H(+) antiporter NhaB (500 aa).

13 helical membrane-spanning segments follow: residues 11-31, 34-54, 58-78, 96-116, 121-141, 145-165, 205-225, 241-261, 311-331, 350-370, 394-414, 450-470, and 477-497; these read HGFL…FLVL, LLLA…EFIF, MALK…ALLL, VILL…LLLF, ILLG…LSAF, FLDA…FYAV, LLMH…VGEP, FLLK…LTCV, ILII…LMVI, FQDA…VAVI, MLYL…VATI, ATPN…APLI, and MVWM…WAVT.

This sequence belongs to the NhaB Na(+)/H(+) (TC 2.A.34) antiporter family.

It localises to the cell inner membrane. It catalyses the reaction 2 Na(+)(in) + 3 H(+)(out) = 2 Na(+)(out) + 3 H(+)(in). In terms of biological role, na(+)/H(+) antiporter that extrudes sodium in exchange for external protons. The polypeptide is Na(+)/H(+) antiporter NhaB (Pseudomonas putida (strain ATCC 700007 / DSM 6899 / JCM 31910 / BCRC 17059 / LMG 24140 / F1)).